Consider the following 532-residue polypeptide: Probable galacturonosyltransferase 14 (532 aa).

The Cytoplasmic segment spans residues 1 to 40; that stretch reads MQLHISPSMRSITISSSNEFIDLMKIKVAARHISYRTLFH. Residues 41 to 61 traverse the membrane as a helical; Signal-anchor for type II membrane protein segment; it reads TILILAFLLPFVFILTAVVTL. The Lumenal segment spans residues 62–532; that stretch reads EGVNKCSSID…DFIKNCHILE (471 aa). N-linked (GlcNAc...) asparagine glycans are attached at residues N305, N395, N444, and N519.

This sequence belongs to the glycosyltransferase 8 family. As to expression, expressed in roots, inflorescences, siliques, leaves and stems. Accumulates in pollen grains.

Its subcellular location is the golgi apparatus membrane. It functions in the pathway glycan metabolism; pectin biosynthesis. In terms of biological role, may be involved in pectin and/or xylans biosynthesis in cell walls. Together with GAUT13, required for pollen tube growth, possibly through the regulation of pectin biosynthesis and repartition in the pollen tube wall. In Arabidopsis thaliana (Mouse-ear cress), this protein is Probable galacturonosyltransferase 14.